A 984-amino-acid polypeptide reads, in one-letter code: Pre-mRNA-splicing factor cwf10 (984 aa).

Residues Met1–Gln28 are disordered. A tr-type G domain is found at Asp139 to Glu402. The G1 stretch occupies residues Gly148 to Ser155. Residue Gly148–Ser155 coordinates GTP. The G2 stretch occupies residues Val190 to Lys194. Residues Asp216–Gly219 form a G3 region. Residues Asp216 to His220 and Asn270 to Asp273 contribute to the GTP site. A G4 region spans residues Asn270 to Asp273. The tract at residues Gln371–Leu373 is G5.

Belongs to the TRAFAC class translation factor GTPase superfamily. Classic translation factor GTPase family. EF-G/EF-2 subfamily. As to quaternary structure, belongs to the 40S cdc5-associated complex (or cwf complex), a spliceosome sub-complex reminiscent of a late-stage spliceosome composed of the U2, U5 and U6 snRNAs and at least brr2, cdc5, cwf2/prp3, cwf3/syf1, cwf4/syf3, cwf5/ecm2, spp42/cwf6, cwf7/spf27, cwf8, cwf9, cwf10, cwf11, cwf12, prp45/cwf13, cwf14, cwf15, cwf16, cwf17, cwf18, cwf19, cwf20, cwf21, cwf22, cwf23, cwf24, cwf25, cwf26, cyp7/cwf27, cwf28, cwf29/ist3, lea1, msl1, prp5/cwf1, prp10, prp12/sap130, prp17, prp22, sap61, sap62, sap114, sap145, slu7, smb1, smd1, smd3, smf1, smg1 and syf2.

It localises to the cytoplasm. Its subcellular location is the nucleus. In terms of biological role, component of the U5 snRNP complex required for pre-mRNA splicing. Binds GTP. The chain is Pre-mRNA-splicing factor cwf10 (cwf10) from Schizosaccharomyces pombe (strain 972 / ATCC 24843) (Fission yeast).